Consider the following 438-residue polypeptide: MDKTSRRDLLKLASLAGIGAGLARSQGSSKSMAGVSFKPNGTVRIGVIGTGGRGGSLIENFSAVEGVQITALCDTVKDKVLKQQAWLDKAGKASHPIALFHSDDHAFENLVKRDDVDLVVVSTPWVWHTRMAVAAMKQGKHVAVEVPAARTIDECWELVNTSEATQRHCIQLENCCYGYNEMMVLNMVRAGLFGELTHGGAAYNHDLRSILFSAEGEGEWRRFEHLNRDGNLYPTHGLGPVAHYMDVNRGDRFDTLVSMSSISASLQQYRKEKIPAGDPRQKEVYKEGDFNVSLIRTVKGRVIELEHNVSSPQPYDRINLIAGTKGIFRDYPPRIYFDGARREDFETLDRYKEKYEHPLWKKVGELAKELGGHGGMDFVMAYRLIQCMKEGTPPDIDVYDAAAWSAPGPLSEASVANGSAPQKFPDFTRGKWQTRQPV.

The tat-type signal signal peptide spans 1–33; it reads MDKTSRRDLLKLASLAGIGAGLARSQGSSKSMA. Residues 52–53, aspartate 74, 125–128, 145–146, and asparagine 174 each bind NAD(+); these read GR, WVWH, and EV. Substrate-binding positions include tyrosine 203, arginine 221, 233 to 236, and tyrosine 315; that span reads YPTH. Tyrosine 233 contacts NAD(+). The segment at 408 to 438 is disordered; sequence GPLSEASVANGSAPQKFPDFTRGKWQTRQPV.

The protein belongs to the Gfo/Idh/MocA family. Glycosyl hydrolase 109 subfamily. NAD(+) serves as cofactor. Predicted to be exported by the Tat system. The position of the signal peptide cleavage has not been experimentally proven.

In terms of biological role, glycosidase. In Solibacter usitatus (strain Ellin6076), this protein is Glycosyl hydrolase family 109 protein.